The chain runs to 213 residues: Large ribosomal subunit protein uL1 (213 aa).

The protein belongs to the universal ribosomal protein uL1 family. In terms of assembly, part of the 50S ribosomal subunit.

Functionally, probably involved in E site tRNA release. Binds directly to 23S rRNA. In terms of biological role, protein L1 is also a translational repressor protein, it controls the translation of the L1 operon by binding to its mRNA. Thus it also controls transcription of L10 and L12 by translational coupling. Unlike the case in E.coli, where the site is in the untranslated mRNA leader, this site is within the L1 protein's structural gene. The protein is Large ribosomal subunit protein uL1 of Methanococcus vannielii (strain ATCC 35089 / DSM 1224 / JCM 13029 / OCM 148 / SB).